The sequence spans 350 residues: DNA primase small subunit PriS (350 aa).

Catalysis depends on residues D97, D99, and D251.

This sequence belongs to the eukaryotic-type primase small subunit family. In terms of assembly, heterodimer of a small subunit (PriS) and a large subunit (PriL). Mg(2+) is required as a cofactor. It depends on Mn(2+) as a cofactor. The cofactor is Zn(2+).

In terms of biological role, catalytic subunit of DNA primase, an RNA polymerase that catalyzes the synthesis of short RNA molecules used as primers for DNA polymerase during DNA replication. The small subunit contains the primase catalytic core and has DNA synthesis activity on its own. Binding to the large subunit stabilizes and modulates the activity, increasing the rate of DNA synthesis while decreasing the length of the DNA fragments, and conferring RNA synthesis capability. The DNA polymerase activity may enable DNA primase to also catalyze primer extension after primer synthesis. May also play a role in DNA repair. In Methanocaldococcus jannaschii (strain ATCC 43067 / DSM 2661 / JAL-1 / JCM 10045 / NBRC 100440) (Methanococcus jannaschii), this protein is DNA primase small subunit PriS.